The following is a 244-amino-acid chain: 14-3-3 protein beta/alpha-1 (244 aa).

At Met-1 the chain carries N-acetylmethionine.

This sequence belongs to the 14-3-3 family. In terms of assembly, homodimer, and heterodimer with other family members. Expressed in brain, gill, heart, intestine, kidney, liver, ovary, skin, spleen and testis.

Its subcellular location is the cytoplasm. Adapter protein implicated in the regulation of a large spectrum of both general and specialized signaling pathways. Binds to a large number of partners, usually by recognition of a phosphoserine or phosphothreonine motif. Binding generally results in the modulation of the activity of the binding partner. In Oncorhynchus mykiss (Rainbow trout), this protein is 14-3-3 protein beta/alpha-1.